The following is a 315-amino-acid chain: MGRKRKHSETVTAAPVKDSAPERPQRTLLGWKDKKEDAENSKPAYASVFRNKEKVLVTCSRRINFRYRHLMLNMVSLLPHCKKDSKVEAKSSRGATLNELIELKGSSSCLFFECRKHKDLYMWMVKSPGGPSVKFLVNAVHTMEELKLTGNHLKGSRPLLTFSSNFENDAHWKLLKEMLTQIFGIPEGHRKSKPYHDHVFVFSIVDDHIWFRNYQISVPHNESDKIARGDLDKMTLIEVGPRFCLNPIKIFGGSFGGTTLYENPFYVSPNQIRALEKRNKAGKFAKKIKAKTRRKMHELSNPLEPDEFTDMWNDE.

Residues 1 to 35 (MGRKRKHSETVTAAPVKDSAPERPQRTLLGWKDKK) are disordered. The span at 19-35 (SAPERPQRTLLGWKDKK) shows a compositional bias: basic and acidic residues. In terms of domain architecture, Brix spans 53–256 (EKVLVTCSRR…PIKIFGGSFG (204 aa)).

The protein belongs to the BRX1 family. Expressed in roots, rosette leaves, stems, flowers, siliques and seeds.

The protein localises to the nucleus. It localises to the nucleolus. Its function is as follows. Involved in pre-rRNA processing and required for biogenesis of the large (60S) ribosomal subunit. Required for proper development. This Arabidopsis thaliana (Mouse-ear cress) protein is Ribosome biogenesis protein BRX1 homolog 1.